The primary structure comprises 207 residues: uncharacterized protein (207 aa).

Positions 1–19 (MRHGLLALICWLCCVVAHS) are cleaved as a signal peptide.

To P.aeruginosa PA4490 and T.maritima TM0986.

This is an uncharacterized protein from Escherichia coli (strain K12).